Reading from the N-terminus, the 386-residue chain is Na(+)/H(+) antiporter NhaA (386 aa).

11 consecutive transmembrane segments (helical) span residues 10–30 (MGSA…IFAN), 58–78 (LLHW…GLEV), 94–114 (IFPA…YYLI), 124–144 (GWAI…ALLG), 154–174 (FLLA…AVFF), 176–196 (EELS…LITL), 199–219 (MKVG…AAVL), 253–273 (ILTP…NAGV), 283–303 (IFST…PLGV), 327–347 (VFAI…LAGL), and 361–381 (LSRL…YLLL).

This sequence belongs to the NhaA Na(+)/H(+) (TC 2.A.33) antiporter family.

The protein localises to the cell inner membrane. The enzyme catalyses Na(+)(in) + 2 H(+)(out) = Na(+)(out) + 2 H(+)(in). Its function is as follows. Na(+)/H(+) antiporter that extrudes sodium in exchange for external protons. The protein is Na(+)/H(+) antiporter NhaA of Mannheimia succiniciproducens (strain KCTC 0769BP / MBEL55E).